The following is a 175-amino-acid chain: Adenine phosphoribosyltransferase (175 aa).

It belongs to the purine/pyrimidine phosphoribosyltransferase family. As to quaternary structure, homodimer.

The protein localises to the cytoplasm. It catalyses the reaction AMP + diphosphate = 5-phospho-alpha-D-ribose 1-diphosphate + adenine. The protein operates within purine metabolism; AMP biosynthesis via salvage pathway; AMP from adenine: step 1/1. Its function is as follows. Catalyzes a salvage reaction resulting in the formation of AMP, that is energically less costly than de novo synthesis. This Parvibaculum lavamentivorans (strain DS-1 / DSM 13023 / NCIMB 13966) protein is Adenine phosphoribosyltransferase.